A 711-amino-acid polypeptide reads, in one-letter code: Polyribonucleotide nucleotidyltransferase (711 aa).

Mg(2+)-binding residues include Asp490 and Asp496. The 60-residue stretch at 557–616 (PRIETMQIPTDKIREVIGSGGKVIREIVETSGAKVDINDDGIIKIASANGEAIKKAYEMI) folds into the KH domain. Residues 626–694 (GKVYTGTVVK…DRGKVRLSMK (69 aa)) form the S1 motif domain.

Belongs to the polyribonucleotide nucleotidyltransferase family. It depends on Mg(2+) as a cofactor.

It localises to the cytoplasm. It carries out the reaction RNA(n+1) + phosphate = RNA(n) + a ribonucleoside 5'-diphosphate. Functionally, involved in mRNA degradation. Catalyzes the phosphorolysis of single-stranded polyribonucleotides processively in the 3'- to 5'-direction. The polypeptide is Polyribonucleotide nucleotidyltransferase (Dinoroseobacter shibae (strain DSM 16493 / NCIMB 14021 / DFL 12)).